The primary structure comprises 2629 residues: Protein DOP1 homolog (2629 aa).

7 disordered regions span residues 561–584 (NKGV…SRLN), 605–652 (SASN…TPRS), 688–710 (AGNV…PQFY), 1278–1340 (MDES…SSSA), 1371–1395 (TYRL…QTEH), 1435–1471 (ISKT…ATDS), and 1766–1785 (RQDT…SPTR). Composition is skewed to polar residues over residues 605–615 (SASNQSVGRQS) and 636–647 (ASDTGQQSSSDL). Acidic residues predominate over residues 1307 to 1320 (DITDNSDSSDFESD). Residues 1321 to 1333 (SELRETSLEKEDS) show a composition bias toward basic and acidic residues. 2 stretches are compositionally biased toward polar residues: residues 1381–1391 (GENSLNSVATD) and 1435–1450 (ISKT…SCSQ).

The protein belongs to the DOP1 family.

It localises to the golgi apparatus membrane. Its function is as follows. May be involved in protein traffic between late Golgi and early endosomes. This Drosophila pseudoobscura pseudoobscura (Fruit fly) protein is Protein DOP1 homolog.